The primary structure comprises 230 residues: ATP-dependent dethiobiotin synthetase BioD (230 aa).

ATP is bound at residue 12–17; that stretch reads DIGKTH. Residue threonine 16 participates in Mg(2+) binding. The active site involves lysine 37. Serine 41 serves as a coordination point for substrate. ATP-binding positions include aspartate 52, 115–118, and 175–176; these read EGAG and SE. Positions 52 and 115 each coordinate Mg(2+).

It belongs to the dethiobiotin synthetase family. In terms of assembly, homodimer. Mg(2+) is required as a cofactor.

The protein localises to the cytoplasm. The enzyme catalyses (7R,8S)-7,8-diammoniononanoate + CO2 + ATP = (4R,5S)-dethiobiotin + ADP + phosphate + 3 H(+). Its pathway is cofactor biosynthesis; biotin biosynthesis; biotin from 7,8-diaminononanoate: step 1/2. Its function is as follows. Catalyzes a mechanistically unusual reaction, the ATP-dependent insertion of CO2 between the N7 and N8 nitrogen atoms of 7,8-diaminopelargonic acid (DAPA, also called 7,8-diammoniononanoate) to form a ureido ring. The chain is ATP-dependent dethiobiotin synthetase BioD from Caulobacter sp. (strain K31).